The chain runs to 670 residues: UvrABC system protein B (670 aa).

The region spanning 25-412 is the Helicase ATP-binding domain; that stretch reads EGLEAGLSHQ…AGRVIEQVVR (388 aa). Position 38-45 (38-45) interacts with ATP; the sequence is GVTGSGKT. Positions 91 to 114 match the Beta-hairpin motif; sequence YYDYYQPEAYVPSSDTYIEKDSSI. In terms of domain architecture, Helicase C-terminal spans 429–582; the sequence is QVDDLLSQIR…QIAFNEAHGI (154 aa). The region spanning 631–666 is the UVR domain; the sequence is SKRIRQLEEKMYQLARDLEFEAAAQLRDEIQTLRER.

It belongs to the UvrB family. As to quaternary structure, forms a heterotetramer with UvrA during the search for lesions. Interacts with UvrC in an incision complex.

It is found in the cytoplasm. Functionally, the UvrABC repair system catalyzes the recognition and processing of DNA lesions. A damage recognition complex composed of 2 UvrA and 2 UvrB subunits scans DNA for abnormalities. Upon binding of the UvrA(2)B(2) complex to a putative damaged site, the DNA wraps around one UvrB monomer. DNA wrap is dependent on ATP binding by UvrB and probably causes local melting of the DNA helix, facilitating insertion of UvrB beta-hairpin between the DNA strands. Then UvrB probes one DNA strand for the presence of a lesion. If a lesion is found the UvrA subunits dissociate and the UvrB-DNA preincision complex is formed. This complex is subsequently bound by UvrC and the second UvrB is released. If no lesion is found, the DNA wraps around the other UvrB subunit that will check the other stand for damage. This Pseudomonas aeruginosa (strain ATCC 15692 / DSM 22644 / CIP 104116 / JCM 14847 / LMG 12228 / 1C / PRS 101 / PAO1) protein is UvrABC system protein B.